Reading from the N-terminus, the 171-residue chain is Adenine phosphoribosyltransferase (171 aa).

Belongs to the purine/pyrimidine phosphoribosyltransferase family. Homodimer.

It is found in the cytoplasm. The catalysed reaction is AMP + diphosphate = 5-phospho-alpha-D-ribose 1-diphosphate + adenine. It participates in purine metabolism; AMP biosynthesis via salvage pathway; AMP from adenine: step 1/1. Its function is as follows. Catalyzes a salvage reaction resulting in the formation of AMP, that is energically less costly than de novo synthesis. This is Adenine phosphoribosyltransferase from Methylococcus capsulatus (strain ATCC 33009 / NCIMB 11132 / Bath).